The following is a 155-amino-acid chain: RNA pyrophosphohydrolase (155 aa).

The Nudix hydrolase domain occupies 5-147 (RYRPNVAAIV…KRPVYKKVLE (143 aa)). Residues 42-63 (GGIDKGESPKEALLRELKEEIG) carry the Nudix box motif.

It belongs to the Nudix hydrolase family. RppH subfamily. Requires a divalent metal cation as cofactor.

Accelerates the degradation of transcripts by removing pyrophosphate from the 5'-end of triphosphorylated RNA, leading to a more labile monophosphorylated state that can stimulate subsequent ribonuclease cleavage. This chain is RNA pyrophosphohydrolase, found in Nitratiruptor sp. (strain SB155-2).